A 505-amino-acid chain; its full sequence is Probable alpha-L-arabinofuranosidase C (505 aa).

N-linked (GlcNAc...) asparagine glycans are attached at residues Asn-152, Asn-181, and Asn-269.

It belongs to the glycosyl hydrolase 51 family.

The protein localises to the secreted. It carries out the reaction Hydrolysis of terminal non-reducing alpha-L-arabinofuranoside residues in alpha-L-arabinosides.. Its pathway is glycan metabolism; L-arabinan degradation. Alpha-L-arabinofuranosidase involved in the degradation of arabinoxylan, a major component of plant hemicellulose. Acts only on small linear 1,5-alpha-linked L-arabinofuranosyl oligosaccharides. This chain is Probable alpha-L-arabinofuranosidase C (abfC), found in Aspergillus niger (strain ATCC MYA-4892 / CBS 513.88 / FGSC A1513).